The primary structure comprises 216 residues: Regulatory protein RecX (216 aa).

The protein belongs to the RecX family.

It is found in the cytoplasm. Its function is as follows. Modulates RecA activity. The sequence is that of Regulatory protein RecX from Clostridium tetani (strain Massachusetts / E88).